The primary structure comprises 139 residues: Putative pre-16S rRNA nuclease (139 aa).

This sequence belongs to the YqgF nuclease family.

It localises to the cytoplasm. Its function is as follows. Could be a nuclease involved in processing of the 5'-end of pre-16S rRNA. The protein is Putative pre-16S rRNA nuclease of Streptococcus gordonii (strain Challis / ATCC 35105 / BCRC 15272 / CH1 / DL1 / V288).